The chain runs to 134 residues: Spermadhesin-1 (134 aa).

The N-terminal stretch at 1–20 (MKLSSVIPWALLLSTATVDS) is a signal peptide. Intrachain disulfides connect cysteine 30-cysteine 51 and cysteine 74-cysteine 95. The region spanning 30 to 131 (CGGILKEESG…SFYEVLYFQD (102 aa)) is the CUB domain.

This sequence belongs to the spermadhesin family. In terms of tissue distribution, seminal vesicle tissue, ampulla and weakly in tissue of epididymis.

The protein resides in the secreted. Its function is as follows. Stimulates cell division and progesterone secretion of bovine granulosa cells in vitro in a potent and dose dependent manner. This protein appears to be a potent growth factor with effects on ovarian granulosa cells. This Bos taurus (Bovine) protein is Spermadhesin-1 (SPADH1).